The chain runs to 371 residues: tRNA-specific 2-thiouridylase MnmA (371 aa).

ATP-binding positions include 13 to 20 (GMSGGVDS) and methionine 39. An interaction with target base in tRNA region spans residues 99-101 (NPD). Cysteine 104 functions as the Nucleophile in the catalytic mechanism. A disulfide bridge connects residues cysteine 104 and cysteine 200. Glycine 128 provides a ligand contact to ATP. The interaction with tRNA stretch occupies residues 150-152 (KDQ). The active-site Cysteine persulfide intermediate is cysteine 200. The segment at 308-309 (RY) is interaction with tRNA.

Belongs to the MnmA/TRMU family.

Its subcellular location is the cytoplasm. It catalyses the reaction S-sulfanyl-L-cysteinyl-[protein] + uridine(34) in tRNA + AH2 + ATP = 2-thiouridine(34) in tRNA + L-cysteinyl-[protein] + A + AMP + diphosphate + H(+). In terms of biological role, catalyzes the 2-thiolation of uridine at the wobble position (U34) of tRNA, leading to the formation of s(2)U34. The sequence is that of tRNA-specific 2-thiouridylase MnmA from Listeria monocytogenes serovar 1/2a (strain ATCC BAA-679 / EGD-e).